The following is a 46-amino-acid chain: Photosystem II reaction center protein K (46 aa).

A propeptide spanning residues 1-9 (MESILMIFA) is cleaved from the precursor. Residues 25–45 (LPVIPVLFLLLAFVWQAAVSF) traverse the membrane as a helical segment.

It belongs to the PsbK family. In terms of assembly, PSII is composed of 1 copy each of membrane proteins PsbA, PsbB, PsbC, PsbD, PsbE, PsbF, PsbH, PsbI, PsbJ, PsbK, PsbL, PsbM, PsbT, PsbX, PsbY, PsbZ, Psb30/Ycf12, at least 3 peripheral proteins of the oxygen-evolving complex and a large number of cofactors. It forms dimeric complexes.

The protein localises to the plastid. Its subcellular location is the chloroplast thylakoid membrane. In terms of biological role, one of the components of the core complex of photosystem II (PSII). PSII is a light-driven water:plastoquinone oxidoreductase that uses light energy to abstract electrons from H(2)O, generating O(2) and a proton gradient subsequently used for ATP formation. It consists of a core antenna complex that captures photons, and an electron transfer chain that converts photonic excitation into a charge separation. The polypeptide is Photosystem II reaction center protein K (Stigeoclonium helveticum (Green alga)).